Consider the following 381-residue polypeptide: Heme A synthase (381 aa).

The interval 1–23 (MARRPVFQEVTETTPPGTTPSGG) is disordered. Over residues 11–23 (TETTPPGTTPSGG) the composition is skewed to low complexity. 8 helical membrane passes run 34 to 54 (GAIR…IALG), 120 to 140 (RLLG…FLAT), 151 to 171 (LLLL…MVHS), 185 to 205 (LATH…YVLA), 228 to 248 (TTGL…VAGI), 285 to 305 (LVQF…VVVF), 319 to 339 (AYVA…MNVL), and 342 to 362 (SPLP…TLIL). A heme-binding site is contributed by His290. His350 contacts heme.

It belongs to the COX15/CtaA family. Type 2 subfamily. In terms of assembly, interacts with CtaB. The cofactor is heme b.

The protein resides in the cell membrane. The enzyme catalyses Fe(II)-heme o + 2 A + H2O = Fe(II)-heme a + 2 AH2. It participates in porphyrin-containing compound metabolism; heme A biosynthesis; heme A from heme O: step 1/1. Functionally, catalyzes the conversion of heme O to heme A by two successive hydroxylations of the methyl group at C8. The first hydroxylation forms heme I, the second hydroxylation results in an unstable dihydroxymethyl group, which spontaneously dehydrates, resulting in the formyl group of heme A. This Paracoccus denitrificans (strain Pd 1222) protein is Heme A synthase.